A 174-amino-acid chain; its full sequence is Ribosome maturation factor RimM (174 aa).

Residues 95-174 form the PRC barrel domain; that stretch reads DDEFYWRDLI…QIQVEWPSDF (80 aa).

This sequence belongs to the RimM family. Binds ribosomal protein uS19.

The protein localises to the cytoplasm. Functionally, an accessory protein needed during the final step in the assembly of 30S ribosomal subunit, possibly for assembly of the head region. Essential for efficient processing of 16S rRNA. May be needed both before and after RbfA during the maturation of 16S rRNA. It has affinity for free ribosomal 30S subunits but not for 70S ribosomes. This is Ribosome maturation factor RimM from Idiomarina loihiensis (strain ATCC BAA-735 / DSM 15497 / L2-TR).